A 173-amino-acid polypeptide reads, in one-letter code: Crossover junction endodeoxyribonuclease RuvC (173 aa).

Residues aspartate 11, glutamate 71, and aspartate 143 contribute to the active site. Mg(2+) is bound by residues aspartate 11, glutamate 71, and aspartate 143.

The protein belongs to the RuvC family. Homodimer which binds Holliday junction (HJ) DNA. The HJ becomes 2-fold symmetrical on binding to RuvC with unstacked arms; it has a different conformation from HJ DNA in complex with RuvA. In the full resolvosome a probable DNA-RuvA(4)-RuvB(12)-RuvC(2) complex forms which resolves the HJ. Mg(2+) serves as cofactor.

It is found in the cytoplasm. It catalyses the reaction Endonucleolytic cleavage at a junction such as a reciprocal single-stranded crossover between two homologous DNA duplexes (Holliday junction).. In terms of biological role, the RuvA-RuvB-RuvC complex processes Holliday junction (HJ) DNA during genetic recombination and DNA repair. Endonuclease that resolves HJ intermediates. Cleaves cruciform DNA by making single-stranded nicks across the HJ at symmetrical positions within the homologous arms, yielding a 5'-phosphate and a 3'-hydroxyl group; requires a central core of homology in the junction. The consensus cleavage sequence is 5'-(A/T)TT(C/G)-3'. Cleavage occurs on the 3'-side of the TT dinucleotide at the point of strand exchange. HJ branch migration catalyzed by RuvA-RuvB allows RuvC to scan DNA until it finds its consensus sequence, where it cleaves and resolves the cruciform DNA. In Brucella suis (strain ATCC 23445 / NCTC 10510), this protein is Crossover junction endodeoxyribonuclease RuvC.